A 275-amino-acid polypeptide reads, in one-letter code: 3-methyl-2-oxobutanoate hydroxymethyltransferase (275 aa).

2 residues coordinate Mg(2+): aspartate 49 and aspartate 88. 3-methyl-2-oxobutanoate contacts are provided by residues 49–50 (DS), aspartate 88, and lysine 118. Residue glutamate 120 coordinates Mg(2+). The Proton acceptor role is filled by glutamate 187.

The protein belongs to the PanB family. As to quaternary structure, homodecamer; pentamer of dimers. The cofactor is Mg(2+).

It is found in the cytoplasm. It carries out the reaction 3-methyl-2-oxobutanoate + (6R)-5,10-methylene-5,6,7,8-tetrahydrofolate + H2O = 2-dehydropantoate + (6S)-5,6,7,8-tetrahydrofolate. It participates in cofactor biosynthesis; (R)-pantothenate biosynthesis; (R)-pantoate from 3-methyl-2-oxobutanoate: step 1/2. Catalyzes the reversible reaction in which hydroxymethyl group from 5,10-methylenetetrahydrofolate is transferred onto alpha-ketoisovalerate to form ketopantoate. This Bordetella petrii (strain ATCC BAA-461 / DSM 12804 / CCUG 43448) protein is 3-methyl-2-oxobutanoate hydroxymethyltransferase.